Consider the following 185-residue polypeptide: Ribosome-recycling factor (185 aa).

It belongs to the RRF family.

The protein localises to the cytoplasm. Responsible for the release of ribosomes from messenger RNA at the termination of protein biosynthesis. May increase the efficiency of translation by recycling ribosomes from one round of translation to another. The chain is Ribosome-recycling factor from Pseudomonas savastanoi pv. phaseolicola (strain 1448A / Race 6) (Pseudomonas syringae pv. phaseolicola (strain 1448A / Race 6)).